Here is a 194-residue protein sequence, read N- to C-terminus: Superoxide dismutase [Cu-Zn] (194 aa).

The first 20 residues, 1 to 20 (MTRPLALIIFLVAILTNTDP), serve as a signal peptide directing secretion. Residues H85 and H104 each contribute to the Cu cation site. C96 and C188 are disulfide-bonded. Residues H104, H112, H121, and D124 each coordinate Zn(2+). H162 provides a ligand contact to Cu cation.

The protein belongs to the Cu-Zn superoxide dismutase family. In terms of assembly, homodimer. Cu cation serves as cofactor. It depends on Zn(2+) as a cofactor.

It carries out the reaction 2 superoxide + 2 H(+) = H2O2 + O2. Functionally, destroys radicals which are normally produced within the cells and which are toxic to biological systems. This chain is Superoxide dismutase [Cu-Zn], found in Ramazzottius varieornatus (Water bear).